A 519-amino-acid polypeptide reads, in one-letter code: Ribonuclease Y (519 aa).

The helical transmembrane segment at 3-23 (LLSLLLILLGIILGVVVGYIV) threads the bilayer. The KH domain maps to 209-269 (TVSVVNLPND…IRREIARTAL (61 aa)). Positions 335 to 428 (VLKHSIEVAH…VAAADALSAA (94 aa)) constitute an HD domain.

It belongs to the RNase Y family.

Its subcellular location is the cell membrane. Functionally, endoribonuclease that initiates mRNA decay. The sequence is that of Ribonuclease Y from Staphylococcus epidermidis (strain ATCC 35984 / DSM 28319 / BCRC 17069 / CCUG 31568 / BM 3577 / RP62A).